Consider the following 402-residue polypeptide: Beta-ketoacyl-[acyl-carrier-protein] synthase III B, chloroplastic (402 aa).

Active-site residues include cysteine 178, histidine 328, and asparagine 358.

The protein belongs to the thiolase-like superfamily. FabH family.

The protein localises to the plastid. It is found in the chloroplast. The catalysed reaction is malonyl-[ACP] + acetyl-CoA + H(+) = 3-oxobutanoyl-[ACP] + CO2 + CoA. Its pathway is lipid metabolism; fatty acid biosynthesis. In terms of biological role, catalyzes the condensation reaction of fatty acid synthesis by the addition to an acyl acceptor of two carbons from malonyl-ACP. KAS III catalyzes the first condensation reaction which initiates fatty acid synthesis and may therefore play a role in governing the total rate of fatty acid production. Possesses both acetoacetyl-ACP synthase and acetyl transacylase activities. In Cuphea wrightii (Wright's waxweed), this protein is Beta-ketoacyl-[acyl-carrier-protein] synthase III B, chloroplastic (KAS3B).